The sequence spans 140 residues: Myrosinase 2 (140 aa).

Catalysis depends on R70, which acts as the Nucleophile. N114 and N127 each carry an N-linked (GlcNAc...) asparagine glycan.

The protein belongs to the glycosyl hydrolase 1 family. In terms of assembly, homodimer.

It carries out the reaction a thioglucoside + H2O = a sugar + a thiol.. Its activity is regulated as follows. Inhibited by ascorbate. Functionally, degradation of glucosinolates (glucose residue linked by a thioglucoside bound to an amino acid derivative) to glucose, sulfate and any of the products: thiocyanates, isothiocyanates, nitriles, epithionitriles or oxazolidine-2-thiones. The sequence is that of Myrosinase 2 from Brevicoryne brassicae (Mealy cabbage aphid).